The chain runs to 538 residues: Chaperonin GroEL (538 aa).

Residues threonine 29 to proline 32, aspartate 86 to threonine 90, glycine 413, asparagine 476 to alanine 478, and aspartate 492 each bind ATP.

It belongs to the chaperonin (HSP60) family. Forms a cylinder of 14 subunits composed of two heptameric rings stacked back-to-back. Interacts with the co-chaperonin GroES.

Its subcellular location is the cytoplasm. The catalysed reaction is ATP + H2O + a folded polypeptide = ADP + phosphate + an unfolded polypeptide.. Its function is as follows. Together with its co-chaperonin GroES, plays an essential role in assisting protein folding. The GroEL-GroES system forms a nano-cage that allows encapsulation of the non-native substrate proteins and provides a physical environment optimized to promote and accelerate protein folding. This is Chaperonin GroEL from Staphylococcus aureus (strain Mu3 / ATCC 700698).